The sequence spans 432 residues: E3 ubiquitin-protein ligase RNF135 (432 aa).

The RING-type zinc-finger motif lies at 21–63 (CIICQGLLDWPATLPCGHSFCRHCLEALWGARDARRWACPTCR). Positions 95 to 121 (GSDPAHCPCPGSSSLSSAAARPRRRPE) are disordered. Over residues 102–114 (PCPGSSSLSSAAA) the composition is skewed to low complexity. 2 coiled-coil regions span residues 121 to 156 (ELQRVAVEKSITEVAQELTELVEHLVDIVRSLQNQR) and 191 to 216 (DTAAGKIRDILHDLEEIQEKLQESVT). One can recognise a B30.2/SPRY domain in the interval 241–432 (PDQSHPALRR…NYLIIKQVKV (192 aa)).

Homodimer. Interacts (homodimer) with RIGI (double-stranded RNA-bound oligomeric form); involved in both RIGI ubiquitination, oligomerization into filaments associated with viral RNAs and the bridging of these filaments. Interacts with UBE2D3 and UBE2N; E2 ubiquitin ligases involved in RNF135-mediated ubiquitination of RIGI and activation of the RIG-I signaling pathway. Interacts with PCBP2. In terms of processing, (Microbial infection) Cleaved and inactivated by hepatitis C virus NS3/NS4A. In terms of tissue distribution, expressed in skeletal muscle, spleen, kidney, placenta, prostate, stomach, thyroid and tongue. Also weakly expressed in heart, thymus, liver and lung.

The protein localises to the cytoplasm. It localises to the stress granule. It carries out the reaction S-ubiquitinyl-[E2 ubiquitin-conjugating enzyme]-L-cysteine + [acceptor protein]-L-lysine = [E2 ubiquitin-conjugating enzyme]-L-cysteine + N(6)-ubiquitinyl-[acceptor protein]-L-lysine.. It functions in the pathway protein modification; protein ubiquitination. E2-dependent E3 ubiquitin-protein ligase that functions as a RIGI coreceptor in the sensing of viral RNAs in cell cytoplasm and the activation of the antiviral innate immune response. Together with the UBE2D3, UBE2N and UB2V1 E2 ligases, catalyzes the 'Lys-63'-linked polyubiquitination of RIGI oligomerized on viral RNAs, an essential step in the activation of the RIG-I signaling pathway. Through a ubiquitin-independent parallel mechanism, which consists in bridging RIGI filaments forming on longer viral RNAs, further activates the RIG-I signaling pathway. This second mechanism that synergizes with the ubiquitin-dependent one would thereby allow an RNA length-dependent regulation of the RIG-I signaling pathway. Associated with the E2 ligase UBE2N, also constitutively synthesizes unanchored 'Lys-63'-linked polyubiquitin chains that may also activate the RIG-I signaling pathway. This is E3 ubiquitin-protein ligase RNF135 from Homo sapiens (Human).